Consider the following 156-residue polypeptide: Ribosomal RNA large subunit methyltransferase H (156 aa).

S-adenosyl-L-methionine is bound by residues leucine 73, glycine 104, and isoleucine 123–leucine 128.

The protein belongs to the RNA methyltransferase RlmH family. As to quaternary structure, homodimer.

Its subcellular location is the cytoplasm. It carries out the reaction pseudouridine(1915) in 23S rRNA + S-adenosyl-L-methionine = N(3)-methylpseudouridine(1915) in 23S rRNA + S-adenosyl-L-homocysteine + H(+). Its function is as follows. Specifically methylates the pseudouridine at position 1915 (m3Psi1915) in 23S rRNA. The protein is Ribosomal RNA large subunit methyltransferase H of Xanthomonas campestris pv. campestris (strain 8004).